Consider the following 906-residue polypeptide: MLSILKKLFGTANDRTVKKLFSEITKINSLEPAIQKLSDEELKNKTVEFKEKLKNGATLDDIVYEAFAVVREAAKRVCGMRHFDVQLIGGLILHRGMITEMRTGEGKTLVATLPAYLNALTGKGVHVVTVNDYLARRDSASMGKIYNFLGLSVGCIVGGMPDEVKRAAYNADITHATNNELGFDYLRDNMKYSLQERVLRPFNFAIIDEVDSILIDEARTPLVISGPVNDNAELYGKIDKIVRLLNASDFEKDEKLKTINLTETGITHIESLLSKENIIKPDTSLYDFENLTLVHYVNQALRAHNMFTVNVDYLVREGKVMIIDEFTGRVMEGRRYSEGLHQALEAKENVKIQNENQTLASITFQNYFRNYPKLSGMTGTAMTEAPELKDIYNLDVVAVPTHNKVTRLDLDDEIYGSKKEKYDAILKLIRDCYDRGQPMLVGTISIEKSEELSSVLNKEKIPHKVLNAKFHEQEAFIIAQAGRFKAVTIATNMAGRGTDIMLGGNPEMLIEQLDKEHNYEAKIAEIKAQIAEEKKQVIEAGGLFVIGTERHESRRIDNQLRGRSGRQGDPGKTKFFLSLDDDLMRIFASDRISGVLRTLGLKDGEAIHHPMISRSLEKAQQKVEGHNYEMRKNLLRFDDVMNDQRKIIYEQRTEIIKSKDSHGFLNSTTEELAKKIVLTFMPVGSYREDWDIENLSVELHRVFSIKFDHNVVSKNDVTEEEITKTVIQMAHYIYKSKEEAYSSELMHNAMKYILLTTLDQVWKDHLYSLDHLRQGISLRAYGQKDPLSEYKREAFNLFEQMLNNLKELFIQTVYHFHIDLKNVQKEDVSLEYKKLQKNMRESREDPAFSKYNAGSSLETDLKPVVSRIDPKDRNPDDPTSWGRVSRNELCPCGSGKKYKYCHGANE.

ATP contacts are provided by residues Gln86, 104 to 108 (GEGKT), and Asp499. The disordered stretch occupies residues 862 to 887 (KPVVSRIDPKDRNPDDPTSWGRVSRN). Residues Cys890, Cys892, Cys901, and His902 each contribute to the Zn(2+) site.

This sequence belongs to the SecA family. Monomer and homodimer. Part of the essential Sec protein translocation apparatus which comprises SecA, SecYEG and auxiliary proteins SecDF-YajC and YidC. Requires Zn(2+) as cofactor.

The protein resides in the cell inner membrane. Its subcellular location is the cytoplasm. The enzyme catalyses ATP + H2O + cellular proteinSide 1 = ADP + phosphate + cellular proteinSide 2.. In terms of biological role, part of the Sec protein translocase complex. Interacts with the SecYEG preprotein conducting channel. Has a central role in coupling the hydrolysis of ATP to the transfer of proteins into and across the cell membrane, serving both as a receptor for the preprotein-SecB complex and as an ATP-driven molecular motor driving the stepwise translocation of polypeptide chains across the membrane. The polypeptide is Protein translocase subunit SecA (Rickettsia peacockii (strain Rustic)).